Reading from the N-terminus, the 550-residue chain is Arginine--tRNA ligase (550 aa).

The short motif at 125–135 (ANPTGPLHIGH) is the 'HIGH' region element.

Belongs to the class-I aminoacyl-tRNA synthetase family. In terms of assembly, monomer.

It is found in the cytoplasm. It carries out the reaction tRNA(Arg) + L-arginine + ATP = L-arginyl-tRNA(Arg) + AMP + diphosphate. This Lawsonia intracellularis (strain PHE/MN1-00) protein is Arginine--tRNA ligase.